The following is a 351-amino-acid chain: Thiamine-phosphate synthase (351 aa).

A unknown region spans residues 1 to 127 (MQNLAPASEG…SETAKALRYR (127 aa)). The segment at 64–84 (RAARQTDQDPGTALSHPQERD) is disordered. The thiamine-phosphate synthase stretch occupies residues 128-351 (VYILEQALTL…LRRLSQGEPS (224 aa)). Residues 178 to 182 (QYRDK) and asparagine 210 contribute to the 4-amino-2-methyl-5-(diphosphooxymethyl)pyrimidine site. Mg(2+)-binding residues include aspartate 211 and aspartate 230. Residue serine 249 participates in 4-amino-2-methyl-5-(diphosphooxymethyl)pyrimidine binding. Residue 275–277 (TPT) coordinates 2-[(2R,5Z)-2-carboxy-4-methylthiazol-5(2H)-ylidene]ethyl phosphate. Lysine 278 contacts 4-amino-2-methyl-5-(diphosphooxymethyl)pyrimidine. Glycine 305 serves as a coordination point for 2-[(2R,5Z)-2-carboxy-4-methylthiazol-5(2H)-ylidene]ethyl phosphate.

This sequence belongs to the thiamine-phosphate synthase family. Requires Mg(2+) as cofactor.

It catalyses the reaction 2-[(2R,5Z)-2-carboxy-4-methylthiazol-5(2H)-ylidene]ethyl phosphate + 4-amino-2-methyl-5-(diphosphooxymethyl)pyrimidine + 2 H(+) = thiamine phosphate + CO2 + diphosphate. The catalysed reaction is 2-(2-carboxy-4-methylthiazol-5-yl)ethyl phosphate + 4-amino-2-methyl-5-(diphosphooxymethyl)pyrimidine + 2 H(+) = thiamine phosphate + CO2 + diphosphate. It carries out the reaction 4-methyl-5-(2-phosphooxyethyl)-thiazole + 4-amino-2-methyl-5-(diphosphooxymethyl)pyrimidine + H(+) = thiamine phosphate + diphosphate. It participates in cofactor biosynthesis; thiamine diphosphate biosynthesis; thiamine phosphate from 4-amino-2-methyl-5-diphosphomethylpyrimidine and 4-methyl-5-(2-phosphoethyl)-thiazole: step 1/1. Functionally, condenses 4-methyl-5-(beta-hydroxyethyl)thiazole monophosphate (THZ-P) and 2-methyl-4-amino-5-hydroxymethyl pyrimidine pyrophosphate (HMP-PP) to form thiamine monophosphate (TMP). In Thermosynechococcus vestitus (strain NIES-2133 / IAM M-273 / BP-1), this protein is Thiamine-phosphate synthase.